We begin with the raw amino-acid sequence, 604 residues long: ATPase family AAA domain-containing protein 3A homolog (604 aa).

The disordered stretch occupies residues 1-50 (MSWLLGRNRQQPQPDQTAGFSEGGGAADPEGRTAGEKSGDSQLSRAERKA). Polar residues predominate over residues 8–19 (NRQQPQPDQTAG). The span at 29-50 (PEGRTAGEKSGDSQLSRAERKA) shows a compositional bias: basic and acidic residues. Residues 62-221 (ERAADAAKTL…INLEKIRLKA (160 aa)) adopt a coiled-coil conformation. 358–365 (GPPGTGKT) contacts ATP.

Can form homooligomers.

Its subcellular location is the mitochondrion inner membrane. The protein localises to the mitochondrion matrix. The protein resides in the mitochondrion nucleoid. Functionally, required to maintain the proper number of mitochondria in neurons and muscles. The sequence is that of ATPase family AAA domain-containing protein 3A homolog from Drosophila melanogaster (Fruit fly).